Consider the following 212-residue polypeptide: Probable nicotinate-nucleotide adenylyltransferase (212 aa).

This sequence belongs to the NadD family.

It carries out the reaction nicotinate beta-D-ribonucleotide + ATP + H(+) = deamido-NAD(+) + diphosphate. It participates in cofactor biosynthesis; NAD(+) biosynthesis; deamido-NAD(+) from nicotinate D-ribonucleotide: step 1/1. In terms of biological role, catalyzes the reversible adenylation of nicotinate mononucleotide (NaMN) to nicotinic acid adenine dinucleotide (NaAD). The protein is Probable nicotinate-nucleotide adenylyltransferase of Methylibium petroleiphilum (strain ATCC BAA-1232 / LMG 22953 / PM1).